The chain runs to 1218 residues: NACHT, LRR and PYD domains-containing protein 1a allele 1 (1218 aa).

The disordered stretch occupies residues 1–61 (MEESQSKQES…SLPGWSSTSN (61 aa)). A compositionally biased stretch (polar residues) spans 7-29 (KQESNTRVAQHGSQQDVDPTFQT). The 310-residue stretch at 175–484 (QLVIIEGAAG…EFFAAMSYIL (310 aa)) folds into the NACHT domain. ATP is bound at residue 181–188 (GAAGIGKS). 3 LRR repeats span residues 343–364 (KERNTIIDFNLIGSIPVLLTLC), 673–693 (NLEELDLSGNPLSYSAVRSLC), and 730–750 (RLAELDLRLNDLGDNGVRQLC). Residues 799 to 815 (TMPTENTDGEESLTSSK) show a composition bias toward polar residues. The interval 799-842 (TMPTENTDGEESLTSSKQQQQQSGDKHMEPLGTDDDFWGPSGPV) is disordered. The ZU5 stretch occupies residues 835–968 (FWGPSGPVST…HFAVLENPSF (134 aa)). One can recognise an FIIND domain in the interval 835–1118 (FWGPSGPVST…LRPALPRMAS (284 aa)). Residues 969–1118 (SPMGVLLRMI…LRPALPRMAS (150 aa)) are UPA. In terms of domain architecture, CARD spans 1122–1211 (DAPALLHFVD…HLIMDLLEKS (90 aa)).

It belongs to the NLRP family. Interacts (via LRR repeats) with BCL2 and BCL2L1 (via the loop between motifs BH4 and BH3). Interacts with NOD2; this interaction is enhanced in the presence of muramyl dipeptide (MDP) and increases IL1B release. Interacts with EIF2AK2/PKR; this interaction requires EIF2AK2 activity, is accompanied by EIF2AK2 autophosphorylation and promotes inflammasome assembly in response to danger-associated signals. Interacts with MEFV; this interaction targets Nlrp1a to degradation by autophagy, hence preventing excessive IL1B- and IL18-mediated inflammation. Interacts with DPP9; leading to inhibit activation of the inflammasome. DPP9 acts via formation of a ternary complex, composed of a DPP9 homodimer, one full-length NLRP1 protein, and one cleaved C-terminus of Nlrp1a (NACHT, LRR and PYD domains-containing protein 1a, C-terminus). Interacts with DPP8; leading to inhibit activation of the inflammasome, probably via formation of a ternary complex with DPP8. As to quaternary structure, interacts with the C-terminal part of Nlrp1a (NACHT, LRR and PYD domains-containing protein 1a, C-terminus) in absence of pathogens and other damage-associated signals. In terms of assembly, interacts with the N-terminal part of Nlrp1a (NACHT, LRR and PYD domains-containing protein 1a, N-terminus) in absence of pathogens and other damage-associated signals. Homomultimer; forms the Nlrp1a inflammasome polymeric complex, a filament composed of homopolymers of this form in response to pathogens and other damage-associated signals. The Nlrp1a inflammasome polymeric complex directly recruits pro-caspase-1 (proCASP1) independently of PYCARD/ASC. Interacts (via CARD domain) with CASP1 (via CARD domain); leading to CASP1 activation. Autocatalytically cleaved. Autocatalytic cleavage in FIIND region occurs constitutively, prior to activation signals, and is required for inflammasome activity (IL1B release), possibly by facilitating CASP1 binding. Both N- and C-terminal parts remain associated non-covalently. In terms of processing, (Microbial infection) Cleavage by B.anthracis lethal toxin (LT) endopeptidase promotes ubiquitination and degradation of the N-terminal part, releasing the cleaved C-terminal part of the protein (NACHT, LRR and PYD domains-containing protein 1a, C-terminus), which polymerizes and forms the Nlrp1a inflammasome. Post-translationally, ubiquitinated in response to pathogen-associated signals, leading to its degradation by the proteasome and subsequent release of the cleaved C-terminal part of the protein (NACHT, LRR and PYD domains-containing protein 1a, C-terminus), which polymerizes and forms the Nlrp1a inflammasome.

It is found in the cytoplasm. The protein resides in the cytosol. The protein localises to the nucleus. Its subcellular location is the inflammasome. Activated by cleavage by B.anthracis lethal toxin (LT) endopeptidase. Cleavage by LT promotes ubiquitination and degradation of the N-terminal part, releasing the cleaved C-terminal part of the protein (NACHT, LRR and PYD domains-containing protein 1a, C-terminus), which polymerizes and forms the Nlrp1a inflammasome. Nlrp1a inflammasome is inhibited by DPP8 and DPP9, which sequester the C-terminal fragment of Nlrp1a (NACHT, LRR and PYD domains-containing protein 1a, C-terminus) in a ternary complex, thereby preventing Nlrp1a oligomerization and activation. Nlrp1a inflammasome is weakly activated by Val-boroPro (Talabostat, PT-100), an inhibitor of dipeptidyl peptidases DPP8 and DPP9. Val-boroPro relieves inhibition of DPP8 and/or DPP9 by promoting disruption of the ternary complex, releasing its C-terminal part from autoinhibition. Weakly activated by Toxoplasma gondii. Acts as the sensor component of the Nlrp1a inflammasome, which mediates inflammasome activation in response to various pathogen-associated signals, leading to subsequent pyroptosis. Inflammasomes are supramolecular complexes that assemble in the cytosol in response to pathogens and other damage-associated signals and play critical roles in innate immunity and inflammation. Acts as a recognition receptor (PRR): recognizes specific pathogens and other damage-associated signals, such as B.anthracis lethal toxin (LT) or Val-boroPro inhibitor, and mediates the formation of the inflammasome polymeric complex. In response to pathogen-associated signals, the N-terminal part of Nlrp1a is degraded by the proteasome, releasing the cleaved C-terminal part of the protein (NACHT, LRR and PYD domains-containing protein 1a, C-terminus), which polymerizes to initiate the formation of the inflammasome complex: the inflammasome directly recruits pro-caspase-1 (proCASP1) independently of PYCARD/ASC and promotes caspase-1 (CASP1) activation, which subsequently cleaves and activates inflammatory cytokines IL1B and IL18 and gasdermin-D (GSDMD), leading to pyroptosis. In the absence of GSDMD expression, the Nlrp1a inflammasome is able to recruit and activate CASP8, leading to activation of gasdermin-E (GSDME). Functionally, constitutes the precursor of the Nlrp1a inflammasome, which mediates autoproteolytic processing within the FIIND domain to generate the N-terminal and C-terminal parts, which are associated non-covalently in absence of pathogens and other damage-associated signals. Its function is as follows. Regulatory part that prevents formation of the Nlrp1a inflammasome: in absence of pathogens and other damage-associated signals, interacts with the C-terminal part of Nlrp1a (NACHT, LRR and PYD domains-containing protein 1a, C-terminus), preventing activation of the Nlrp1a inflammasome. In response to pathogen-associated signals, this part is ubiquitinated by the N-end rule pathway and degraded by the proteasome, releasing the cleaved C-terminal part of the protein, which polymerizes and forms the Nlrp1a inflammasome. In terms of biological role, constitutes the active part of the Nlrp1a inflammasome. In absence of pathogens and other damage-associated signals, interacts with the N-terminal part of Nlrp1a (NACHT, LRR and PYD domains-containing protein 1a, N-terminus), preventing activation of the Nlrp1a inflammasome. In response to pathogen-associated signals, the N-terminal part of Nlrp1a is degraded by the proteasome, releasing this form, which polymerizes to form the Nlrp1a inflammasome complex: the Nlrp1a inflammasome complex then directly recruits pro-caspase-1 (proCASP1) and promotes caspase-1 (CASP1) activation, leading to gasdermin-D (GSDMD) cleavage and subsequent pyroptosis. This chain is NACHT, LRR and PYD domains-containing protein 1a allele 1, found in Rattus norvegicus (Rat).